The sequence spans 297 residues: uncharacterized protein (297 aa).

4 consecutive transmembrane segments (helical) span residues 3-23, 38-58, 103-123, and 128-148; these read DYIYPIIAGVIAGIATRLYML, VIHIALGLIAAGLGAIIMPAL, IEGIAIAFESRNYIVIFTALL, and YVFLSIWAAVIAAVVCFLLAM.

The protein resides in the cell membrane. This is an uncharacterized protein from Bacillus subtilis (strain 168).